A 393-amino-acid polypeptide reads, in one-letter code: Lipid-A-disaccharide synthase (393 aa).

Belongs to the LpxB family.

The catalysed reaction is a lipid X + a UDP-2-N,3-O-bis[(3R)-3-hydroxyacyl]-alpha-D-glucosamine = a lipid A disaccharide + UDP + H(+). It participates in bacterial outer membrane biogenesis; LPS lipid A biosynthesis. Condensation of UDP-2,3-diacylglucosamine and 2,3-diacylglucosamine-1-phosphate to form lipid A disaccharide, a precursor of lipid A, a phosphorylated glycolipid that anchors the lipopolysaccharide to the outer membrane of the cell. The sequence is that of Lipid-A-disaccharide synthase from Bordetella petrii (strain ATCC BAA-461 / DSM 12804 / CCUG 43448).